The primary structure comprises 453 residues: Protein IVY1 (453 aa).

The span at 1–16 (MPDNNTEQLQGSPSSD) shows a compositional bias: polar residues. Residues 1 to 20 (MPDNNTEQLQGSPSSDQRLR) are disordered. Phosphoserine is present on residues serine 59, serine 84, and serine 85. Coiled-coil stretches lie at residues 102-122 (KRDV…SNAY) and 230-257 (IRNL…KHDF). Disordered stretches follow at residues 316-340 (DGPY…EETG) and 353-453 (TSQP…SSNI). Residue serine 335 is modified to Phosphoserine. The span at 353-371 (TSQPSTSKTSLPKSKGSST) shows a compositional bias: low complexity. Polar residues-rich tracts occupy residues 372-384 (VSTP…SSNK) and 404-429 (LMGT…TFKQ). The span at 431 to 442 (SIKEDNDNHSSD) shows a compositional bias: basic and acidic residues. Residues 443–453 (TDGMQDQSSNI) show a composition bias toward polar residues.

Homomultimer. Interacts with YPT7 and VPS33.

It localises to the vacuole membrane. Functionally, may be required for vacuolar fusion. Overexpression leads to fragmentation of vacuoles, missorting of the vacuolar enzyme carboxypeptidase Y (CPY) to the exterior of the cell and accumulation of multivesicular bodies inside the cell. The polypeptide is Protein IVY1 (IVY1) (Saccharomyces cerevisiae (strain ATCC 204508 / S288c) (Baker's yeast)).